Reading from the N-terminus, the 582-residue chain is Vesicular glutamate transporter 2 (582 aa).

Topologically, residues 1-71 (MESVKQRILT…CTCFGLPRRY (71 aa)) are cytoplasmic. A helical membrane pass occupies residues 72-92 (IIAIMSGLGFCISFGIRCNLG). Residues 93 to 125 (VAIVDMVNNSTIHRGGKVIKEKAKFNWDPETVG) are Vesicular-facing. Asn100 and Asn101 each carry an N-linked (GlcNAc...) asparagine glycan. Residues 126-146 (MIHGSFFWGYIITQIPGGYIA) form a helical membrane-spanning segment. Over 147 to 148 (SR) the chain is Cytoplasmic. A helical transmembrane segment spans residues 149-169 (LAANRVFGAAILLTSTLNMLI). The Vesicular segment spans residues 170-177 (PSAARVHY). Residues 178-198 (GCVIFVRILQGLVEGVTYPAC) form a helical membrane-spanning segment. Residues 199–216 (HGIWSKWAPPLERSRLAT) are Cytoplasmic-facing. Residues 217–237 (TSFCGSYAGAVIAMPLAGILV) form a helical membrane-spanning segment. The Vesicular segment spans residues 238–244 (QYTGWSS). A helical membrane pass occupies residues 245-265 (VFYVYGSFGMIWYMFWLLVSY). Topologically, residues 266 to 310 (ESPAKHPTITDEERRYIEESIGESANLLGAMEKFKTPWRKFFTSM) are cytoplasmic. Residues 311–331 (PVYAIIVANFCRSWTFYLLLI) traverse the membrane as a helical segment. The Vesicular portion of the chain corresponds to 332–349 (SQPAYFEEVFGFEISKVG). Residues 350 to 370 (MLSAVPHLVMTIIVPIGGQIA) traverse the membrane as a helical segment. The Cytoplasmic portion of the chain corresponds to 371 to 386 (DFLRSKQILSTTTVRK). Residues 387-407 (IMNCGGFGMEATLLLVVGYSH) traverse the membrane as a helical segment. The Vesicular portion of the chain corresponds to 408 to 409 (TR). A helical transmembrane segment spans residues 410-430 (GVAISFLVLAVGFSGFAISGF). The Cytoplasmic portion of the chain corresponds to 431–443 (NVNHLDIAPRYAS). Residues 444–464 (ILMGISNGVGTLSGMVCPIIV) traverse the membrane as a helical segment. The Vesicular segment spans residues 465–477 (GAMTKNKSREEWQ). N-linked (GlcNAc...) asparagine glycosylation occurs at Asn470. A helical transmembrane segment spans residues 478-498 (YVFLIAALVHYGGVIFYAIFA). The Cytoplasmic portion of the chain corresponds to 499-582 (SGEKQPWADP…YNYKDRDDYS (84 aa)).

This sequence belongs to the major facilitator superfamily. Sodium/anion cotransporter family. VGLUT subfamily.

The protein localises to the cytoplasmic vesicle. Its subcellular location is the secretory vesicle. It is found in the synaptic vesicle membrane. It localises to the synapse. The protein resides in the synaptosome. The protein localises to the cell membrane. The enzyme catalyses L-glutamate(out) = L-glutamate(in). The catalysed reaction is 3 Na(+)(out) + phosphate(out) = 3 Na(+)(in) + phosphate(in). It catalyses the reaction phosphate(in) = phosphate(out). It carries out the reaction K(+)(in) + H(+)(out) = K(+)(out) + H(+)(in). The enzyme catalyses chloride(in) = chloride(out). With respect to regulation, chloride channel activity is allosterically activated by lumenal H(+) and Cl(-) leading to synaptic vesicles acidification. The L-glutamate transport activity is allosterically activated by lumenal H(+) and Cl(-). The allosteric requirement for H(+) efficiently prevents non-vesicular efflux across the plasma membrane. The L-glutamate uniporter activity exhibits a biphasic dependence on chloride concentration. Multifunctional transporter that transports L-glutamate as well as multiple ions such as chloride, proton, potassium, sodium and phosphate. At the synaptic vesicle membrane, mainly functions as a uniporter which transports preferentially L-glutamate but also, phosphate from the cytoplasm into synaptic vesicles at presynaptic nerve terminals of excitatory neural cells. The L-glutamate or phosphate uniporter activity is electrogenic and is driven by the proton electrochemical gradient, mainly by the electrical gradient established by the vacuolar H(+)-ATPase across the synaptic vesicle membrane. In addition, functions as a chloride channel that allows a chloride permeation through the synaptic vesicle membrane therefore affects the proton electrochemical gradient and promotes synaptic vesicles acidification. Moreover, functions as a vesicular K(+)/H(+) antiport allowing to maintain the electrical gradient and to decrease chemical gradient and therefore sustain vesicular L-glutamate uptake. The vesicular H(+)/H(+) antiport activity is electroneutral. At the plasma membrane, following exocytosis, functions as a symporter of Na(+) and phosphate from the extracellular space to the cytoplasm allowing synaptic phosphate homeostasis regulation. The symporter activity is driven by an inside negative membrane potential and is electrogenic. Also involved in the regulation of retinal hyaloid vessel regression during postnatal development. May also play a role in the endocrine L-glutamatergic system of other tissues such as pineal gland and pancreas. This Bos taurus (Bovine) protein is Vesicular glutamate transporter 2.